Consider the following 579-residue polypeptide: Rop guanine nucleotide exchange factor 6 (579 aa).

Residues 31-61 show a composition bias toward low complexity; it reads ESTTDSSLSSSSSGVGSSSGRSSVAERSVSS. The disordered stretch occupies residues 31 to 89; it reads ESTTDSSLSSSSSGVGSSSGRSSVAERSVSSPPTKSQILGWPLGQGSWRKSSGKMKKKT. Positions 98–479 constitute a PRONE domain; sequence FKRVGTETSE…DISKDDGDGD (382 aa).

In terms of biological role, guanine-nucleotide exchange factor (GEF) that acts as an activator of Rop (Rho of plants) GTPases by promoting the exchange of GDP for GTP. In Arabidopsis thaliana (Mouse-ear cress), this protein is Rop guanine nucleotide exchange factor 6 (ROPGEF6).